A 339-amino-acid chain; its full sequence is Nicotinate-nucleotide--dimethylbenzimidazole phosphoribosyltransferase (339 aa).

The active-site Proton acceptor is E306.

This sequence belongs to the CobT family.

It catalyses the reaction 5,6-dimethylbenzimidazole + nicotinate beta-D-ribonucleotide = alpha-ribazole 5'-phosphate + nicotinate + H(+). It functions in the pathway nucleoside biosynthesis; alpha-ribazole biosynthesis; alpha-ribazole from 5,6-dimethylbenzimidazole: step 1/2. In terms of biological role, catalyzes the synthesis of alpha-ribazole-5'-phosphate from nicotinate mononucleotide (NAMN) and 5,6-dimethylbenzimidazole (DMB). This chain is Nicotinate-nucleotide--dimethylbenzimidazole phosphoribosyltransferase, found in Brucella anthropi (strain ATCC 49188 / DSM 6882 / CCUG 24695 / JCM 21032 / LMG 3331 / NBRC 15819 / NCTC 12168 / Alc 37) (Ochrobactrum anthropi).